The following is a 282-amino-acid chain: Nucleotide-binding protein XCV3122 (282 aa).

5–12 (GLSGSGKS) is an ATP binding site. 57-60 (DVRS) is a binding site for GTP.

This sequence belongs to the RapZ-like family.

Displays ATPase and GTPase activities. The chain is Nucleotide-binding protein XCV3122 from Xanthomonas euvesicatoria pv. vesicatoria (strain 85-10) (Xanthomonas campestris pv. vesicatoria).